Here is a 212-residue protein sequence, read N- to C-terminus: 3-isopropylmalate dehydratase small subunit (212 aa).

This sequence belongs to the LeuD family. LeuD type 1 subfamily. In terms of assembly, heterodimer of LeuC and LeuD.

It catalyses the reaction (2R,3S)-3-isopropylmalate = (2S)-2-isopropylmalate. It participates in amino-acid biosynthesis; L-leucine biosynthesis; L-leucine from 3-methyl-2-oxobutanoate: step 2/4. Catalyzes the isomerization between 2-isopropylmalate and 3-isopropylmalate, via the formation of 2-isopropylmaleate. This chain is 3-isopropylmalate dehydratase small subunit, found in Laribacter hongkongensis (strain HLHK9).